A 313-amino-acid chain; its full sequence is tRNA dimethylallyltransferase (313 aa).

An ATP-binding site is contributed by 11 to 18 (GPTACGKT). 13-18 (TACGKT) serves as a coordination point for substrate. 3 interaction with substrate tRNA regions span residues 36–39 (DSAL), 160–164 (QRIGR), and 243–248 (RCVGYR).

It belongs to the IPP transferase family. In terms of assembly, monomer. It depends on Mg(2+) as a cofactor.

It catalyses the reaction adenosine(37) in tRNA + dimethylallyl diphosphate = N(6)-dimethylallyladenosine(37) in tRNA + diphosphate. Functionally, catalyzes the transfer of a dimethylallyl group onto the adenine at position 37 in tRNAs that read codons beginning with uridine, leading to the formation of N6-(dimethylallyl)adenosine (i(6)A). This chain is tRNA dimethylallyltransferase, found in Neisseria gonorrhoeae (strain NCCP11945).